We begin with the raw amino-acid sequence, 493 residues long: Amidophosphoribosyltransferase (493 aa).

Residues 1-26 (MIPTQPLTADLDCDLGLERPDRPEEA) constitute a propeptide that is removed on maturation. The active-site Nucleophile is the Cys27. The Glutamine amidotransferase type-2 domain occupies 27–252 (CGVFALYAPG…PGEMVRITDA (226 aa)). Cys268 serves as a coordination point for [4Fe-4S] cluster. Ser315, Asp377, and Asp378 together coordinate Mg(2+). Positions 414, 465, and 468 each coordinate [4Fe-4S] cluster.

The protein in the C-terminal section; belongs to the purine/pyrimidine phosphoribosyltransferase family. Requires Mg(2+) as cofactor. [4Fe-4S] cluster is required as a cofactor.

The catalysed reaction is 5-phospho-beta-D-ribosylamine + L-glutamate + diphosphate = 5-phospho-alpha-D-ribose 1-diphosphate + L-glutamine + H2O. It participates in purine metabolism; IMP biosynthesis via de novo pathway; N(1)-(5-phospho-D-ribosyl)glycinamide from 5-phospho-alpha-D-ribose 1-diphosphate: step 1/2. Its function is as follows. Catalyzes the formation of phosphoribosylamine from phosphoribosylpyrophosphate (PRPP) and glutamine. The chain is Amidophosphoribosyltransferase from Synechococcus elongatus (strain ATCC 33912 / PCC 7942 / FACHB-805) (Anacystis nidulans R2).